We begin with the raw amino-acid sequence, 800 residues long: Nuclear poly(A) polymerase 2 (800 aa).

ATP-binding positions include 103–105 (FGS), 115–118 (ADID), Asp171, Lys232, Tyr241, and 250–251 (GV). Mg(2+) contacts are provided by Asp116, Asp118, and Asp171. 2 consecutive short sequence motifs (nuclear localization signal) follow at residues 487–494 (RRRQLPSF) and 533–540 (KRKNDDEI). Residues 497 to 576 (PNGYKRSRQS…SGITTSGTPQ (80 aa)) are disordered. Basic and acidic residues predominate over residues 527 to 538 (SVERYAKRKNDD). Residues 564 to 575 (PDSSGITTSGTP) show a composition bias toward polar residues.

It belongs to the poly(A) polymerase family. Monomer. Forms a complex with cleavage and polyadenylation specificity factor (CPSF) subunits CPSF100, CPSF30, FIPS5 and PABN2. Requires Mg(2+) as cofactor. Mn(2+) is required as a cofactor. As to expression, mostly expressed in flowers (highly in the style, receptacle and pedicel, but weakly in the vasculature of sepals) and hypocotyls, and, to a lower extent, in roots and stems. Barely detected in leaves (petioles and vascular system).

The protein resides in the nucleus. Its subcellular location is the cytoplasm. The catalysed reaction is RNA(n) + ATP = RNA(n)-3'-adenine ribonucleotide + diphosphate. In terms of biological role, essential protein. Polymerase that creates the 3'-poly(A) tail of mRNA's. Also required for the endoribonucleolytic cleavage reaction at some polyadenylation sites. May acquire specificity through interaction with a cleavage and polyadenylation specificity factor (CPSF) at its C-terminus. Mediates the polyadenylation of RNAs that are associated with polynucleotide phosphorylase (e.g. PNP1). This is Nuclear poly(A) polymerase 2 from Arabidopsis thaliana (Mouse-ear cress).